The chain runs to 92 residues: Large ribosomal subunit protein eL31 (92 aa).

This sequence belongs to the eukaryotic ribosomal protein eL31 family.

This chain is Large ribosomal subunit protein eL31, found in Halobacterium salinarum (strain ATCC 29341 / DSM 671 / R1).